The primary structure comprises 1517 residues: DNA-directed RNA polymerase subunit beta' (1517 aa).

Zn(2+)-binding residues include C71, C73, C86, and C89. Positions 482, 484, and 486 each coordinate Mg(2+). Zn(2+) contacts are provided by C812, C886, C893, and C896.

It belongs to the RNA polymerase beta' chain family. In terms of assembly, the RNAP catalytic core consists of 2 alpha, 1 beta, 1 beta' and 1 omega subunit. When a sigma factor is associated with the core the holoenzyme is formed, which can initiate transcription. It depends on Mg(2+) as a cofactor. Zn(2+) serves as cofactor.

The catalysed reaction is RNA(n) + a ribonucleoside 5'-triphosphate = RNA(n+1) + diphosphate. Its function is as follows. DNA-dependent RNA polymerase catalyzes the transcription of DNA into RNA using the four ribonucleoside triphosphates as substrates. The sequence is that of DNA-directed RNA polymerase subunit beta' from Campylobacter jejuni subsp. jejuni serotype O:2 (strain ATCC 700819 / NCTC 11168).